The primary structure comprises 158 residues: Putative cTAGE family member 3 (158 aa).

A coiled-coil region spans residues 26–96; sequence QLQESQKQLL…AAVLEEDITD (71 aa).

This sequence belongs to the cTAGE family. As to expression, expressed in normal tissues including colon, mammary gland, ovary, placenta, stomach and testis, as well as several fetal tissues.

Its function is as follows. Tumor-associated antigen. This Homo sapiens (Human) protein is Putative cTAGE family member 3 (CTAGE3P).